We begin with the raw amino-acid sequence, 164 residues long: Class I hydrophobin rodA (164 aa).

The first 18 residues, methionine 1–alanine 18, serve as a signal peptide directing secretion. A glycan (N-linked (GlcNAc...) asparagine) is linked at asparagine 50. 4 disulfides stabilise this stretch: cysteine 60–cysteine 138, cysteine 68–cysteine 132, cysteine 69–cysteine 109, and cysteine 139–cysteine 157.

This sequence belongs to the fungal hydrophobin family. As to quaternary structure, self-assembles to form functional amyloid fibrils called rodlets. Self-assembly into fibrillar rodlets occurs spontaneously at hydrophobic:hydrophilic interfaces and the rodlets further associate laterally to form amphipathic monolayers.

The protein localises to the secreted. The protein resides in the cell wall. Functionally, aerial growth, conidiation, and dispersal of filamentous fungi in the environment rely upon a capability of their secreting small amphipathic proteins called hydrophobins (HPBs) with low sequence identity. Class I can self-assemble into an outermost layer of rodlet bundles on aerial cell surfaces, conferring cellular hydrophobicity that supports fungal growth, development and dispersal; whereas Class II form highly ordered films at water-air interfaces through intermolecular interactions but contribute nothing to the rodlet structure. RodA is a class I hydrophobin involved in the cell surface hydrophobicity. The surface rodlet layer of the conidial cell wall makes airborne conidia of filamentous fungi inert to both innate and adaptive immunity. The chain is Class I hydrophobin rodA from Penicillium camemberti (strain FM 013).